The chain runs to 242 residues: Protein HTATIP2 (242 aa).

At A2 the chain carries N-acetylalanine. Residues 2-25 (AETEALSKLREDFRMQNKSVFILG) form a required for interaction with elongation factor EEF1A1 region. NADPH is bound by residues S27, G28, E29, T30, R52, R53, L92, G93, Y143, K147, L170, and R178. Catalysis depends on Y143, which acts as the Proton acceptor. The active site involves K147.

In terms of assembly, monomer. Forms homodimers during oxidative stress. Interacts (via N-terminus) with elongation factor EEF1A1 (via middle-region); the interaction is direct and competes with EEF1A1 binding to guanyl-nucleotide exchange factor EEF1B2, thereby inhibiting GDP for GTP exchange and reactivation of EEF1A1. Interacts with nuclear transport receptors XPO4, IPO5/RANBP5, IPO7, IPO9 and KPNB1 as well as GCN1L1/GCN1 and LRPPRC probably through their HEAT repeats. Binds NCOA5/CIA.

It is found in the cytoplasm. Functionally, represses translation by preventing reactivation of elongation factor eEF1A. May also inhibit nuclear import by competing with nuclear import substrates for binding to a subset of nuclear transport receptors. Has additionally been proposed to act as a redox sensor involved in cellular oxidative stress surveillance. This is Protein HTATIP2 (HTATIP2) from Pongo pygmaeus (Bornean orangutan).